The chain runs to 363 residues: Peptide chain release factor 2 (363 aa).

Q251 is subject to N5-methylglutamine.

Belongs to the prokaryotic/mitochondrial release factor family. In terms of processing, methylated by PrmC. Methylation increases the termination efficiency of RF2.

The protein resides in the cytoplasm. Functionally, peptide chain release factor 2 directs the termination of translation in response to the peptide chain termination codons UGA and UAA. This is Peptide chain release factor 2 from Helicobacter pylori (strain Shi470).